A 96-amino-acid polypeptide reads, in one-letter code: Putative pterin-4-alpha-carbinolamine dehydratase (96 aa).

It belongs to the pterin-4-alpha-carbinolamine dehydratase family.

The catalysed reaction is (4aS,6R)-4a-hydroxy-L-erythro-5,6,7,8-tetrahydrobiopterin = (6R)-L-erythro-6,7-dihydrobiopterin + H2O. This is Putative pterin-4-alpha-carbinolamine dehydratase from Caulobacter sp. (strain K31).